The following is a 506-amino-acid chain: GMP synthase [glutamine-hydrolyzing] (506 aa).

Residues 4–192 (KLIILDFGSQ…FLDICGMKRD (189 aa)) form the Glutamine amidotransferase type-1 domain. Cys-79 acts as the Nucleophile in catalysis. Active-site residues include His-167 and Glu-169. The GMPS ATP-PPase domain maps to 193-381 (WTPASFIEAT…LGMMPHLIHR (189 aa)). 220-226 (SGGVDSS) is an ATP binding site.

As to quaternary structure, homodimer.

The catalysed reaction is XMP + L-glutamine + ATP + H2O = GMP + L-glutamate + AMP + diphosphate + 2 H(+). Its pathway is purine metabolism; GMP biosynthesis; GMP from XMP (L-Gln route): step 1/1. Its function is as follows. Catalyzes the synthesis of GMP from XMP. The sequence is that of GMP synthase [glutamine-hydrolyzing] from Porphyromonas gingivalis (strain ATCC 33277 / DSM 20709 / CIP 103683 / JCM 12257 / NCTC 11834 / 2561).